Here is a 101-residue protein sequence, read N- to C-terminus: NAD(P)H-quinone oxidoreductase subunit 4L, chloroplastic (101 aa).

Transmembrane regions (helical) follow at residues 2–22 (MLEH…YGLI), 32–52 (MCLE…SDFF), and 61–81 (IFSI…LAIV).

This sequence belongs to the complex I subunit 4L family. NDH is composed of at least 16 different subunits, 5 of which are encoded in the nucleus.

The protein localises to the plastid. Its subcellular location is the chloroplast thylakoid membrane. It carries out the reaction a plastoquinone + NADH + (n+1) H(+)(in) = a plastoquinol + NAD(+) + n H(+)(out). The enzyme catalyses a plastoquinone + NADPH + (n+1) H(+)(in) = a plastoquinol + NADP(+) + n H(+)(out). Its function is as follows. NDH shuttles electrons from NAD(P)H:plastoquinone, via FMN and iron-sulfur (Fe-S) centers, to quinones in the photosynthetic chain and possibly in a chloroplast respiratory chain. The immediate electron acceptor for the enzyme in this species is believed to be plastoquinone. Couples the redox reaction to proton translocation, and thus conserves the redox energy in a proton gradient. This is NAD(P)H-quinone oxidoreductase subunit 4L, chloroplastic from Panax ginseng (Korean ginseng).